We begin with the raw amino-acid sequence, 500 residues long: Cytochrome P450 monooxygenase acrD (500 aa).

The helical transmembrane segment at 13 to 32 (PYLSGTNLVWTLLLVGYIIP) threads the bilayer. 2 N-linked (GlcNAc...) asparagine glycosylation sites follow: N210 and N414. Residue C447 coordinates heme.

Belongs to the cytochrome P450 family. Heme serves as cofactor.

The protein resides in the membrane. It functions in the pathway secondary metabolite biosynthesis. Its function is as follows. Cytochrome P450 monooxygenase; part of the cluster that mediates the biosynthesis of acurin A, a highly reduced polyketide coupled to a serine via a peptide bond. The activities of the highly reducing polyketide synthase acrA and the nonribosomal peptide synthetase acrB are collectively responsible for the synthesis of the acurin A core structure with a heptaketide backbone produced by acrA covalently fused to a L-serine by acrB. After the formation of the PK-NRP hybrid product, it is detached from acrB by reductive release to set up the formation of the lactam ring by aldol condensation. The hydrolyase acrC then catalyzes water loss to generate a double bond in the ring. This double bond is probably reduced, which is followed by three oxidations at C-22 to generate the carboxylic acid moiety, involving probably the FAD-binding monooxygenase acrE and the cytochrome P450 monooxygenases acrD and acrF. Finally, a last methylation step performed by the O-methyltransferase acrG leads to the production of acurin A. This Aspergillus aculeatus (strain ATCC 16872 / CBS 172.66 / WB 5094) protein is Cytochrome P450 monooxygenase acrD.